Consider the following 148-residue polypeptide: Large ribosomal subunit protein uL15 (148 aa).

Residues 1 to 51 (MNLSSLKPAEGAVKSRKRIGRGPGSGLGGTSTRGHKGAKSRSGYSKKIGFE) form a disordered region. Gly residues predominate over residues 21 to 31 (RGPGSGLGGTS).

It belongs to the universal ribosomal protein uL15 family. In terms of assembly, part of the 50S ribosomal subunit.

Binds to the 23S rRNA. This Porphyromonas gingivalis (strain ATCC BAA-308 / W83) protein is Large ribosomal subunit protein uL15.